A 189-amino-acid polypeptide reads, in one-letter code: Large ribosomal subunit protein uL5 (189 aa).

It belongs to the universal ribosomal protein uL5 family. As to quaternary structure, part of the 50S ribosomal subunit; part of the 5S rRNA/L5/L18/L25 subcomplex. Contacts the 5S rRNA and the P site tRNA. Forms a bridge to the 30S subunit in the 70S ribosome.

In terms of biological role, this is one of the proteins that bind and probably mediate the attachment of the 5S RNA into the large ribosomal subunit, where it forms part of the central protuberance. In the 70S ribosome it contacts protein S13 of the 30S subunit (bridge B1b), connecting the 2 subunits; this bridge is implicated in subunit movement. Contacts the P site tRNA; the 5S rRNA and some of its associated proteins might help stabilize positioning of ribosome-bound tRNAs. The sequence is that of Large ribosomal subunit protein uL5 from Parafrankia sp. (strain EAN1pec).